The following is a 371-amino-acid chain: Chaperone protein DnaJ (371 aa).

Positions 5–69 (DYYEVLGLSK…QKRAQYDQFG (65 aa)) constitute a J domain. Residues 133 to 215 (GKELNVEIPV…CHGSGKVRKR (83 aa)) form a CR-type zinc finger. C146, C149, C163, C166, C189, C192, C203, and C206 together coordinate Zn(2+). 4 CXXCXGXG motif repeats span residues 146-153 (CDTCKGSG), 163-170 (CKHCSGSG), 189-196 (CSHCSGTG), and 203-210 (CTTCHGSG).

This sequence belongs to the DnaJ family. As to quaternary structure, homodimer. Requires Zn(2+) as cofactor.

It localises to the cytoplasm. Its function is as follows. Participates actively in the response to hyperosmotic and heat shock by preventing the aggregation of stress-denatured proteins and by disaggregating proteins, also in an autonomous, DnaK-independent fashion. Unfolded proteins bind initially to DnaJ; upon interaction with the DnaJ-bound protein, DnaK hydrolyzes its bound ATP, resulting in the formation of a stable complex. GrpE releases ADP from DnaK; ATP binding to DnaK triggers the release of the substrate protein, thus completing the reaction cycle. Several rounds of ATP-dependent interactions between DnaJ, DnaK and GrpE are required for fully efficient folding. Also involved, together with DnaK and GrpE, in the DNA replication of plasmids through activation of initiation proteins. The chain is Chaperone protein DnaJ from Bacillus anthracis (strain A0248).